A 523-amino-acid polypeptide reads, in one-letter code: Katanin p60 ATPase-containing subunit A1 (523 aa).

Residues 82–215 (KEAPTGRRAA…DGKSKRGLYE (134 aa)) form a disordered region. The segment covering 178–194 (AGARSSTAGKKGAASKS) has biased composition (low complexity). 279–286 (GPPGTGKT) is an ATP binding site.

Belongs to the AAA ATPase family. Katanin p60 subunit A1 subfamily. In terms of assembly, may homooligomerize. Component of KTN80-KTN1 complexes composed of a hexamer of KTN1-KTN80 heterodimers that sense microtubule (MT) geometry to confer precise MT severing. Interacts directly with KTN80.1, KTN80.2, KTN80.3 and KTN80.4. Can interact with KTN80.1. May interact with the kinesin related protein KIN14A. Interacts with microtubule polymers. Binds to IPGA1. In terms of tissue distribution, expressed ubiquitously, including siliques, flowers, leaves, stems and roots.

The protein resides in the cytoplasm. Its subcellular location is the cytoskeleton. The enzyme catalyses n ATP + n H2O + a microtubule = n ADP + n phosphate + (n+1) alpha/beta tubulin heterodimers.. Its function is as follows. Severs microtubules in vitro in an ATP-dependent manner. Required for oligomerization of functional KTN80-KTN1 complexes that catalyze microtubule severing. This activity may promote rapid reorganization of cellular microtubule arrays. May be required for reorientation of cortical microtubule arrays during cellular elongation. Failure to correctly orient these arrays drastically compromises fiber length, cell wall thickness and mechanical strength. May also be required for the spatial organization of developmental cues within the root. Involved in the IPGA1- and AN-dependent regulation of pavement cells morphogenesis leading to puzzle shape. This Arabidopsis thaliana (Mouse-ear cress) protein is Katanin p60 ATPase-containing subunit A1.